Here is a 63-residue protein sequence, read N- to C-terminus: Toxin Cn11 (63 aa).

Residues 2-63 (RDGYPVDEKG…KVWTYETNTC (62 aa)) enclose the LCN-type CS-alpha/beta domain. 4 disulfide bridges follow: Cys12/Cys63, Cys16/Cys37, Cys23/Cys44, and Cys27/Cys46.

It belongs to the long (4 C-C) scorpion toxin superfamily. Sodium channel inhibitor family. Expressed by the venom gland.

It is found in the secreted. Functionally, first blocker of sodium channels (Nav) found in scorpions. Is lethal to crustaceans (Cambarellus montezumae), less toxic to insects (crickets) and non-toxic to mammals (mice) at the doses assayed. The protein is Toxin Cn11 of Centruroides noxius (Mexican scorpion).